A 259-amino-acid polypeptide reads, in one-letter code: 5'-nucleotidase SurE (259 aa).

A divalent metal cation-binding residues include aspartate 8, aspartate 9, serine 41, and asparagine 99.

This sequence belongs to the SurE nucleotidase family. It depends on a divalent metal cation as a cofactor.

It localises to the cytoplasm. It carries out the reaction a ribonucleoside 5'-phosphate + H2O = a ribonucleoside + phosphate. Functionally, nucleotidase that shows phosphatase activity on nucleoside 5'-monophosphates. This chain is 5'-nucleotidase SurE, found in Synechococcus sp. (strain JA-3-3Ab) (Cyanobacteria bacterium Yellowstone A-Prime).